Consider the following 485-residue polypeptide: D-alanine--D-alanyl carrier protein ligase (485 aa).

Residue 144–145 (TS) coordinates ATP. D-alanine is bound at residue Asp-189. 284–289 (NTYGPT) contacts ATP. D-alanine is bound at residue Val-293. Residues Asp-365 and Lys-473 each coordinate ATP. Position 473 (Lys-473) interacts with D-alanine.

The protein belongs to the ATP-dependent AMP-binding enzyme family. DltA subfamily.

Its subcellular location is the cytoplasm. It catalyses the reaction holo-[D-alanyl-carrier protein] + D-alanine + ATP = D-alanyl-[D-alanyl-carrier protein] + AMP + diphosphate. Its pathway is cell wall biogenesis; lipoteichoic acid biosynthesis. In terms of biological role, catalyzes the first step in the D-alanylation of lipoteichoic acid (LTA), the activation of D-alanine and its transfer onto the D-alanyl carrier protein (Dcp) DltC. In an ATP-dependent two-step reaction, forms a high energy D-alanyl-AMP intermediate, followed by transfer of the D-alanyl residue as a thiol ester to the phosphopantheinyl prosthetic group of the Dcp. D-alanylation of LTA plays an important role in modulating the properties of the cell wall in Gram-positive bacteria, influencing the net charge of the cell wall. The polypeptide is D-alanine--D-alanyl carrier protein ligase (Staphylococcus aureus (strain USA300)).